The primary structure comprises 347 residues: S-adenosylmethionine:tRNA ribosyltransferase-isomerase (347 aa).

This sequence belongs to the QueA family. In terms of assembly, monomer.

The protein resides in the cytoplasm. It catalyses the reaction 7-aminomethyl-7-carbaguanosine(34) in tRNA + S-adenosyl-L-methionine = epoxyqueuosine(34) in tRNA + adenine + L-methionine + 2 H(+). It functions in the pathway tRNA modification; tRNA-queuosine biosynthesis. Its function is as follows. Transfers and isomerizes the ribose moiety from AdoMet to the 7-aminomethyl group of 7-deazaguanine (preQ1-tRNA) to give epoxyqueuosine (oQ-tRNA). This Erythrobacter litoralis (strain HTCC2594) protein is S-adenosylmethionine:tRNA ribosyltransferase-isomerase.